The chain runs to 1192 residues: Reticulon-4 (1192 aa).

Methionine 1 bears the N-acetylmethionine mark. Residues 1–204 (MEDLDQSPLV…ASEPVIRSSA (204 aa)) form a disordered region. The Cytoplasmic segment spans residues 1-1018 (MEDLDQSPLV…LYWRDIKKTG (1018 aa)). Phosphoserine occurs at positions 7 and 15. Over residues 31-53 (PEDEEEEEEEEEEDEDEDLEELE) the composition is skewed to acidic residues. Residues 65–77 (AAPVPTAPAAGAP) are compositionally biased toward low complexity. The segment covering 87–101 (PPAPRGPLPAAPPVA) has biased composition (pro residues). The residue at position 107 (serine 107) is a Phosphoserine. A compositionally biased stretch (low complexity) spans 110–132 (PSPVSSTVPAPSPLSAAAVSPSK). A compositionally biased stretch (pro residues) spans 141-150 (ARPPPPPPAS). Serine 152 carries the post-translational modification Phosphoserine. Residues 159–173 (WTPPAPAPAAPPSTP) show a composition bias toward pro residues. Phosphoserine occurs at positions 181, 182, 184, 361, and 446. Residues 427–458 (DSLEQTNHEKDSESSNDDTSFPSTPEGIKDRS) form a disordered region. Phosphothreonine is present on threonine 450. Phosphoserine is present on serine 511. A compositionally biased stretch (basic and acidic residues) spans 722–734 (AKVEQPVPDHSEL). The segment at 722-762 (AKVEQPVPDHSELVEDSSPDSEPVDLFSDDSIPDVPQKQDE) is disordered. Acidic residues predominate over residues 735–753 (VEDSSPDSEPVDLFSDDSI). Serine 749 carries the phosphoserine modification. Position 858 is a phosphothreonine (threonine 858). Residues serine 881 and serine 991 each carry the phosphoserine modification. Residues 1005 to 1192 (VVDLLYWRDI…KIPGLKRKAE (188 aa)) form the Reticulon domain. The helical transmembrane segment at 1019–1039 (VVFGASLFLLLSLTVFSIVSV) threads the bilayer. Residues 1040–1133 (TAYIALALLS…LMWVFTYVGA (94 aa)) are Lumenal-facing. Lysine 1104 is modified (N6-acetyllysine). The chain crosses the membrane as a helical span at residues 1134–1154 (LFNGLTLLILALISLFSVPVI). Residues 1155–1192 (YERHQAQIDHYLGLANKNVKDAMAKIQAKIPGLKRKAE) lie on the Cytoplasmic side of the membrane.

Binds to RTN4R. Interacts with ATL1. Interacts with TMEM170A. Interacts with RTN4IP1. As to quaternary structure, interacts in trans with CNTNAP1. Interacts with REEP5. Interacts with synaptic plasticity regulator PANTS; the interaction results in enhanced RTN4-mediated inhibition of AMPA receptor clustering. Interacts with GPR50. In terms of assembly, homodimer. Interacts with BAD/Bcl-xl and BCL2. Interact with RTN3. Interacts with NGBR. Interacts with SPTLC1. Interacts with GRAMD4. Interacts with CDH5. Interacts with BACE1 and BACE2. Interacts with REEP5. Interacts with RETREG3. Interacts with BACE1 and BACE2. Interacts with TMEM33. Isoform A: is specifically expressed in brain and testis and weakly in heart and skeletal muscle. Isoform B: widely expressed except for the liver. Highly expressed in endothelial cells and vascular smooth muscle cells, including blood vessels and mesenteric arteries. Isoform C: is expressed in brain, skeletal muscle and adipocytes. Isoform D is testis-specific.

The protein resides in the endoplasmic reticulum membrane. It is found in the cell membrane. Its subcellular location is the synapse. The protein localises to the cell junction. Functionally, required to induce the formation and stabilization of endoplasmic reticulum (ER) tubules. They regulate membrane morphogenesis in the ER by promoting tubular ER production. They influence nuclear envelope expansion, nuclear pore complex formation and proper localization of inner nuclear membrane proteins. However each isoform have specific functions mainly depending on their tissue expression specificities. In terms of biological role, developmental neurite growth regulatory factor with a role as a negative regulator of axon-axon adhesion and growth, and as a facilitator of neurite branching. Regulates neurite fasciculation, branching and extension in the developing nervous system. Involved in down-regulation of growth, stabilization of wiring and restriction of plasticity in the adult CNS. Regulates the radial migration of cortical neurons via an RTN4R-LINGO1 containing receptor complex. Acts as a negative regulator of central nervous system angiogenesis. Inhibits spreading, migration and sprouting of primary brain microvascular endothelial cells (MVECs). Also induces the retraction of MVECs lamellipodia and filopodia in a ROCK pathway-dependent manner. Its function is as follows. Mainly function in endothelial cells and vascular smooth muscle cells, is also involved in immune system regulation. Modulator of vascular remodeling, promotes the migration of endothelial cells but inhibits the migration of vascular smooth muscle cells. Regulates endothelial sphingolipid biosynthesis with direct effects on vascular function and blood pressure. Inhibits serine palmitoyltransferase, SPTLC1, the rate-limiting enzyme of the novo sphingolipid biosynthetic pathway, thereby controlling production of endothelial sphingosine-1-phosphate (S1P). Required to promote macrophage homing and functions such as cytokine/chemokine gene expression involved in angiogenesis, arteriogenesis and tissue repair. Mediates ICAM1 induced transendothelial migration of leukocytes such as monocytes and neutrophils and acute inflammation. Necessary for immune responses triggered by nucleic acid sensing TLRs, such as TLR9, is required for proper TLR9 location to endolysosomes. Also involved in immune response to LPS. Plays a role in liver regeneration through the modulation of hepatocytes proliferation. Reduces the anti-apoptotic activity of Bcl-xl and Bcl-2. This is likely consecutive to their change in subcellular location, from the mitochondria to the endoplasmic reticulum, after binding and sequestration. With isoform C, inhibits BACE1 activity and amyloid precursor protein processing. Regulates cardiomyocyte apoptosis upon hypoxic conditions. With isoform B, inhibits BACE1 activity and amyloid precursor protein processing. The sequence is that of Reticulon-4 from Homo sapiens (Human).